We begin with the raw amino-acid sequence, 312 residues long: Probable HTH-type transcriptional regulator LrhA (312 aa).

The 58-residue stretch at 11–68 folds into the HTH lysR-type domain; the sequence is LDLDLLRTFVAVADLNTFAAAAAAVCRTQSAVSQQMQRLEQLVGKELFARHGRNKLLT. Residues 28–47 constitute a DNA-binding region (H-T-H motif); sequence FAAAAAAVCRTQSAVSQQMQ.

It belongs to the LysR transcriptional regulatory family.

In terms of biological role, not known, does not seem to act on the proton translocating NADH dehydrogenase genes (nuoA-N) which are part of the lrhA operon. This is Probable HTH-type transcriptional regulator LrhA (lrhA) from Escherichia coli (strain K12).